The sequence spans 130 residues: Small ribosomal subunit protein uS11c (130 aa).

It belongs to the universal ribosomal protein uS11 family. In terms of assembly, part of the 30S ribosomal subunit.

The protein resides in the plastid. It is found in the chloroplast. This chain is Small ribosomal subunit protein uS11c, found in Pinus koraiensis (Korean pine).